The sequence spans 344 residues: Phosphate acyltransferase (344 aa).

This sequence belongs to the PlsX family. As to quaternary structure, homodimer. Probably interacts with PlsY.

It localises to the cytoplasm. It catalyses the reaction a fatty acyl-[ACP] + phosphate = an acyl phosphate + holo-[ACP]. It functions in the pathway lipid metabolism; phospholipid metabolism. Its function is as follows. Catalyzes the reversible formation of acyl-phosphate (acyl-PO(4)) from acyl-[acyl-carrier-protein] (acyl-ACP). This enzyme utilizes acyl-ACP as fatty acyl donor, but not acyl-CoA. The protein is Phosphate acyltransferase of Thermosynechococcus vestitus (strain NIES-2133 / IAM M-273 / BP-1).